The following is a 192-amino-acid chain: Fe/S biogenesis protein NfuA (192 aa).

Positions 149 and 152 each coordinate [4Fe-4S] cluster.

This sequence belongs to the NfuA family. In terms of assembly, homodimer. It depends on [4Fe-4S] cluster as a cofactor.

Functionally, involved in iron-sulfur cluster biogenesis. Binds a 4Fe-4S cluster, can transfer this cluster to apoproteins, and thereby intervenes in the maturation of Fe/S proteins. Could also act as a scaffold/chaperone for damaged Fe/S proteins. The polypeptide is Fe/S biogenesis protein NfuA (Proteus mirabilis (strain HI4320)).